We begin with the raw amino-acid sequence, 470 residues long: Glutamyl-tRNA(Gln) amidotransferase subunit A (470 aa).

Catalysis depends on charge relay system residues Lys-71 and Ser-146. Ser-170 functions as the Acyl-ester intermediate in the catalytic mechanism.

The protein belongs to the amidase family. GatA subfamily. As to quaternary structure, heterotrimer of A, B and C subunits.

It carries out the reaction L-glutamyl-tRNA(Gln) + L-glutamine + ATP + H2O = L-glutaminyl-tRNA(Gln) + L-glutamate + ADP + phosphate + H(+). Allows the formation of correctly charged Gln-tRNA(Gln) through the transamidation of misacylated Glu-tRNA(Gln) in organisms which lack glutaminyl-tRNA synthetase. The reaction takes place in the presence of glutamine and ATP through an activated gamma-phospho-Glu-tRNA(Gln). The sequence is that of Glutamyl-tRNA(Gln) amidotransferase subunit A from Akkermansia muciniphila (strain ATCC BAA-835 / DSM 22959 / JCM 33894 / BCRC 81048 / CCUG 64013 / CIP 107961 / Muc).